The following is a 432-amino-acid chain: Adenylosuccinate synthetase (432 aa).

GTP contacts are provided by residues 13-19 (GDEGKGK) and 41-43 (GHT). Asp14 acts as the Proton acceptor in catalysis. Mg(2+) is bound by residues Asp14 and Gly41. IMP contacts are provided by residues 14–17 (DEGK), 39–42 (NAGH), Thr130, Arg144, Gln225, Thr240, and Arg304. Residue His42 is the Proton donor of the active site. 300–306 (AVTGRPR) is a binding site for substrate. Residues Arg306, 332 to 334 (KLD), and 415 to 417 (STG) contribute to the GTP site.

This sequence belongs to the adenylosuccinate synthetase family. Homodimer. Mg(2+) serves as cofactor.

The protein localises to the cytoplasm. The enzyme catalyses IMP + L-aspartate + GTP = N(6)-(1,2-dicarboxyethyl)-AMP + GDP + phosphate + 2 H(+). The protein operates within purine metabolism; AMP biosynthesis via de novo pathway; AMP from IMP: step 1/2. Its function is as follows. Plays an important role in the de novo pathway of purine nucleotide biosynthesis. Catalyzes the first committed step in the biosynthesis of AMP from IMP. The protein is Adenylosuccinate synthetase of Glaesserella parasuis serovar 5 (strain SH0165) (Haemophilus parasuis).